We begin with the raw amino-acid sequence, 1297 residues long: Phosphoribosylformylglycinamidine synthase (1297 aa).

Residues 303–329 (ISPFPGAATGSGGEIRDEGATGRGAKP) are disordered. Position 308–319 (308–319 (GAATGSGGEIRD)) interacts with ATP. Mg(2+) contacts are provided by Asp680, Glu719, Asn723, and Asp887. An ATP-binding site is contributed by Ser889. The Glutamine amidotransferase type-1 domain maps to 1045-1297 (IAILREQGVN…RLFRNARMVF (253 aa)). Cys1138 serves as the catalytic Nucleophile. Residues His1263 and Glu1265 contribute to the active site.

This sequence in the N-terminal section; belongs to the FGAMS family. Monomer.

Its subcellular location is the cytoplasm. It carries out the reaction N(2)-formyl-N(1)-(5-phospho-beta-D-ribosyl)glycinamide + L-glutamine + ATP + H2O = 2-formamido-N(1)-(5-O-phospho-beta-D-ribosyl)acetamidine + L-glutamate + ADP + phosphate + H(+). It participates in purine metabolism; IMP biosynthesis via de novo pathway; 5-amino-1-(5-phospho-D-ribosyl)imidazole from N(2)-formyl-N(1)-(5-phospho-D-ribosyl)glycinamide: step 1/2. Phosphoribosylformylglycinamidine synthase involved in the purines biosynthetic pathway. Catalyzes the ATP-dependent conversion of formylglycinamide ribonucleotide (FGAR) and glutamine to yield formylglycinamidine ribonucleotide (FGAM) and glutamate. This Haemophilus influenzae (strain 86-028NP) protein is Phosphoribosylformylglycinamidine synthase.